The chain runs to 370 residues: Aminomethyltransferase (370 aa).

It belongs to the GcvT family. As to quaternary structure, the glycine cleavage system is composed of four proteins: P, T, L and H.

It catalyses the reaction N(6)-[(R)-S(8)-aminomethyldihydrolipoyl]-L-lysyl-[protein] + (6S)-5,6,7,8-tetrahydrofolate = N(6)-[(R)-dihydrolipoyl]-L-lysyl-[protein] + (6R)-5,10-methylene-5,6,7,8-tetrahydrofolate + NH4(+). The glycine cleavage system catalyzes the degradation of glycine. In Stenotrophomonas maltophilia (strain R551-3), this protein is Aminomethyltransferase.